Consider the following 403-residue polypeptide: Tyrosine--tRNA ligase (403 aa).

Positions 45–54 (PTAPDLHLGH) match the 'HIGH' region motif. The 'KMSKS' region motif lies at 229–233 (KMSKS). Residue Lys232 coordinates ATP. In terms of domain architecture, S4 RNA-binding spans 341–402 (VALCRLLAEA…GKRRFARITF (62 aa)).

Belongs to the class-I aminoacyl-tRNA synthetase family. TyrS type 2 subfamily. Homodimer.

It is found in the cytoplasm. The catalysed reaction is tRNA(Tyr) + L-tyrosine + ATP = L-tyrosyl-tRNA(Tyr) + AMP + diphosphate + H(+). Functionally, catalyzes the attachment of tyrosine to tRNA(Tyr) in a two-step reaction: tyrosine is first activated by ATP to form Tyr-AMP and then transferred to the acceptor end of tRNA(Tyr). In Geobacter sulfurreducens (strain ATCC 51573 / DSM 12127 / PCA), this protein is Tyrosine--tRNA ligase.